The primary structure comprises 219 residues: Probable lipoprotein YiaD (219 aa).

The signal sequence occupies residues 1-20 (MKKRVYLIAAVVSGALAVSG). A lipid anchor (N-palmitoyl cysteine) is attached at Cys-21. Cys-21 carries the S-diacylglycerol cysteine lipid modification. The next 2 helical transmembrane spans lie at 37 to 55 (IGAG…LSSS) and 62 to 84 (GALI…MDVQ). An OmpA-like domain is found at 103-219 (GDNIILNMPN…RRVEITLSPL (117 aa)).

The protein localises to the cell inner membrane. The protein resides in the cell outer membrane. Functionally, suppresses temperature-sensitive mutations in BamB when overexpressed. The polypeptide is Probable lipoprotein YiaD (yiaD) (Escherichia coli (strain K12)).